A 425-amino-acid polypeptide reads, in one-letter code: Protein-glutamate methylesterase/protein-glutamine glutaminase (425 aa).

In terms of domain architecture, Response regulatory spans 22 to 140; the sequence is RVMVVDDSVV…EVAAADIFRH (119 aa). Aspartate 73 is modified (4-aspartylphosphate). Disordered regions lie at residues 150–174 and 203–223; these read AAKR…SNAS and VQRE…RPQP. Residues 221 to 417 form the CheB-type methylesterase domain; sequence PQPTLRSFSA…PLQQIAPKLV (197 aa). Residues serine 241, histidine 269, and aspartate 365 contribute to the active site.

Belongs to the CheB family. In terms of processing, phosphorylated by CheA. Phosphorylation of the N-terminal regulatory domain activates the methylesterase activity.

It is found in the cytoplasm. It carries out the reaction [protein]-L-glutamate 5-O-methyl ester + H2O = L-glutamyl-[protein] + methanol + H(+). The catalysed reaction is L-glutaminyl-[protein] + H2O = L-glutamyl-[protein] + NH4(+). Involved in chemotaxis. Part of a chemotaxis signal transduction system that modulates chemotaxis in response to various stimuli. Catalyzes the demethylation of specific methylglutamate residues introduced into the chemoreceptors (methyl-accepting chemotaxis proteins or MCP) by CheR. Also mediates the irreversible deamidation of specific glutamine residues to glutamic acid. The sequence is that of Protein-glutamate methylesterase/protein-glutamine glutaminase from Nitrobacter winogradskyi (strain ATCC 25391 / DSM 10237 / CIP 104748 / NCIMB 11846 / Nb-255).